The sequence spans 916 residues: DNA mismatch repair protein MutS (916 aa).

Positions 1-47 (MSEALSVPAAEGENTVTASESPDLAATSARAEKVGKQEKPEKAEKQS) are disordered. Basic and acidic residues predominate over residues 30–45 (RAEKVGKQEKPEKAEK). 656–663 (GPNMGGKS) is a binding site for ATP. Residues 843–861 (ADATPTPQMDLFSAQSSPS) are compositionally biased toward polar residues. The tract at residues 843–880 (ADATPTPQMDLFSAQSSPSADDEDDKSAGQSAVPPAQA) is disordered.

Belongs to the DNA mismatch repair MutS family.

This protein is involved in the repair of mismatches in DNA. It is possible that it carries out the mismatch recognition step. This protein has a weak ATPase activity. This Cupriavidus metallidurans (strain ATCC 43123 / DSM 2839 / NBRC 102507 / CH34) (Ralstonia metallidurans) protein is DNA mismatch repair protein MutS.